Here is a 153-residue protein sequence, read N- to C-terminus: Ribonuclease H (153 aa).

Positions 1 to 142 constitute an RNase H type-1 domain; sequence MRKKIEIFTD…CDELARIAAE (142 aa). Residues Asp10, Glu48, Asp70, and Asp134 each contribute to the Mg(2+) site.

It belongs to the RNase H family. As to quaternary structure, monomer. Requires Mg(2+) as cofactor.

Its subcellular location is the cytoplasm. It catalyses the reaction Endonucleolytic cleavage to 5'-phosphomonoester.. Endonuclease that specifically degrades the RNA of RNA-DNA hybrids. This chain is Ribonuclease H, found in Baumannia cicadellinicola subsp. Homalodisca coagulata.